Consider the following 60-residue polypeptide: Myrmicitoxin(1)-Pr4c (60 aa).

Positions M1 to G23 are cleaved as a signal peptide. The propeptide occupies E24–S33. Glutamine amide is present on Q59.

The protein belongs to the formicidae venom clade 2 family. In terms of tissue distribution, expressed by the venom gland.

Its subcellular location is the secreted. Functionally, toxin that causes a rapid and irreversible paralysis when intrathoracically injected into insects (blowflies). Does not cause spontaneous nocifensive behaviors by intraplantar injection in mice. This chain is Myrmicitoxin(1)-Pr4c, found in Pogonomyrmex rugosus (Desert harvester ant).